Consider the following 1146-residue polypeptide: Reverse gyrase 1 (1146 aa).

The segment at 1–38 adopts an RG N-terminal-type zinc-finger fold; the sequence is MIKAIFDTLCPNCGGEISAERLLKGLPCEKCLPEEVNR. Residues Cys10, Cys13, Cys28, and Cys31 each coordinate Zn(2+). Residues Gln79 and 96–103 each bind ATP; that span reads APTGVGKT. The Helicase ATP-binding domain maps to 83–240; it reads ARKVFLGRSF…RLKEKPNKSE (158 aa). The short motif at 197–200 is the DEAD box element; sequence DDVD. The Helicase C-terminal domain maps to 412 to 565; sequence HLLWALLSLR…FKKIEEVDLK (154 aa). Residues 592 to 1146 form a topoisomerase I region; the sequence is EHVKPVLVVV…KVNEFEKANV (555 aa). The region spanning 596–728 is the Toprim domain; the sequence is PVLVVVESPN…NVERIEFHEV (133 aa). Positions 602 and 697 each coordinate Mg(2+). Positions 744–1142 constitute a Topo IA-type catalytic domain; it reads NENLVKAQLV…ELYKKVNEFE (399 aa). Tyr891 functions as the O-(5'-phospho-DNA)-tyrosine intermediate in the catalytic mechanism.

In the N-terminal section; belongs to the DEAD box helicase family. DDVD subfamily. The protein in the C-terminal section; belongs to the type IA topoisomerase family. Monomer. Requires Zn(2+) as cofactor. It depends on Mg(2+) as a cofactor.

It localises to the cytoplasm. It carries out the reaction ATP + H2O = ADP + phosphate + H(+). Modifies the topological state of DNA by introducing positive supercoils in an ATP-dependent process, increasing the linking number in steps of +1. Binds to single-stranded DNA, transiently cleaves and then rejoins the ends, introducing a positive supercoil in the process. The scissile phosphodiester is attacked by the catalytic tyrosine of the enzyme, resulting in the formation of a DNA-(5'-phosphotyrosyl)-enzyme intermediate. Probably involved in rewinding DNA strands in regions of the chromosome that have opened up to allow replication, transcription, DNA repair and/or for DNA protection. The sequence is that of Reverse gyrase 1 from Aquifex aeolicus (strain VF5).